The chain runs to 658 residues: ATP-dependent DNA helicase Rep (658 aa).

The UvrD-like helicase ATP-binding domain maps to 1–280 (MSLNFNQKNA…IKMEQNYRSY (280 aa)). Residues 22-29 (AGAGSGKT) and Arg-278 contribute to the ATP site. The 284-residue stretch at 281–564 (GRILKAANKL…QLMTLHSSKG (284 aa)) folds into the UvrD-like helicase C-terminal domain.

Belongs to the helicase family. UvrD subfamily. As to quaternary structure, homodimer.

The enzyme catalyses Couples ATP hydrolysis with the unwinding of duplex DNA by translocating in the 3'-5' direction.. The catalysed reaction is ATP + H2O = ADP + phosphate + H(+). In terms of biological role, rep helicase is a single-stranded DNA-dependent ATPase involved in DNA replication; it can initiate unwinding at a nick in the DNA. It binds to the single-stranded DNA and acts in a progressive fashion along the DNA in the 3' to 5' direction. The polypeptide is ATP-dependent DNA helicase Rep (Buchnera aphidicola subsp. Schizaphis graminum (strain Sg)).